The chain runs to 529 residues: T-complex protein 1 subunit beta (529 aa).

It belongs to the TCP-1 chaperonin family. As to quaternary structure, heterooligomeric complex of about 850 to 900 kDa that forms two stacked rings, 12 to 16 nm in diameter.

The protein localises to the cytoplasm. Functionally, molecular chaperone; assists the folding of proteins upon ATP hydrolysis. Known to play a role, in vitro, in the folding of actin and tubulin. This Caenorhabditis elegans protein is T-complex protein 1 subunit beta (cct-2).